Consider the following 648-residue polypeptide: Phosphomethylpyrimidine synthase (648 aa).

Substrate-binding positions include Asn253, Met282, Tyr311, His347, 367 to 369 (SRG), 408 to 411 (DGLR), and Glu447. His451 provides a ligand contact to Zn(2+). Residue Tyr474 participates in substrate binding. His515 serves as a coordination point for Zn(2+). Residues Cys595, Cys598, and Cys603 each contribute to the [4Fe-4S] cluster site.

It belongs to the ThiC family. In terms of assembly, homodimer. Requires [4Fe-4S] cluster as cofactor.

The enzyme catalyses 5-amino-1-(5-phospho-beta-D-ribosyl)imidazole + S-adenosyl-L-methionine = 4-amino-2-methyl-5-(phosphooxymethyl)pyrimidine + CO + 5'-deoxyadenosine + formate + L-methionine + 3 H(+). Its pathway is cofactor biosynthesis; thiamine diphosphate biosynthesis. Its function is as follows. Catalyzes the synthesis of the hydroxymethylpyrimidine phosphate (HMP-P) moiety of thiamine from aminoimidazole ribotide (AIR) in a radical S-adenosyl-L-methionine (SAM)-dependent reaction. The chain is Phosphomethylpyrimidine synthase from Burkholderia thailandensis (strain ATCC 700388 / DSM 13276 / CCUG 48851 / CIP 106301 / E264).